Here is a 141-residue protein sequence, read N- to C-terminus: ATP synthase epsilon chain (141 aa).

The protein belongs to the ATPase epsilon chain family. In terms of assembly, F-type ATPases have 2 components, CF(1) - the catalytic core - and CF(0) - the membrane proton channel. CF(1) has five subunits: alpha(3), beta(3), gamma(1), delta(1), epsilon(1). CF(0) has three main subunits: a, b and c.

It is found in the cell inner membrane. Functionally, produces ATP from ADP in the presence of a proton gradient across the membrane. The chain is ATP synthase epsilon chain from Gluconacetobacter diazotrophicus (strain ATCC 49037 / DSM 5601 / CCUG 37298 / CIP 103539 / LMG 7603 / PAl5).